Here is a 79-residue protein sequence, read N- to C-terminus: Putative membrane protein insertion efficiency factor (79 aa).

Belongs to the UPF0161 family.

The protein localises to the cell inner membrane. In terms of biological role, could be involved in insertion of integral membrane proteins into the membrane. The sequence is that of Putative membrane protein insertion efficiency factor from Prochlorococcus marinus (strain SARG / CCMP1375 / SS120).